A 209-amino-acid chain; its full sequence is Ras-like GTP-binding protein RYL2 (209 aa).

12–19 is a binding site for GTP; it reads GAQGVGKT. Residues 34–42 carry the Effector region motif; it reads QASTIGASF. GTP-binding positions include 60–64 and 118–121; these read DTAGQ and TKVD. Residues C208 and C209 are each lipidated (S-geranylgeranyl cysteine).

This sequence belongs to the small GTPase superfamily. Rab family.

Its subcellular location is the cell membrane. Protein transport. Probably involved in vesicular traffic. This Yarrowia lipolytica (strain CLIB 122 / E 150) (Yeast) protein is Ras-like GTP-binding protein RYL2 (RYL2).